Consider the following 147-residue polypeptide: Phospholipase A2 inhibitor subunit B (147 aa).

A C-type lectin domain is found at Glu-62–Phe-143. 2 cysteine pairs are disulfide-bonded: Cys-64-Cys-141 and Cys-119-Cys-133. Asn-103 carries N-linked (GlcNAc...) asparagine glycosylation.

It belongs to the alpha-type phospholipase A2 inhibitor family. Homo- or heterotrimer; homotrimer of PLI-A chains, two PLI-A and one PLI-B chains, one PLI-A and two PLI-B chains, and homotrimer of PLI-B chains (with a ratio of 1:3:3:1). In terms of tissue distribution, expressed by the liver.

Its subcellular location is the secreted. Functionally, PLI binds directly phospholipase A2 in the presence or absence of calcium. Inhibitory activity of the PLI-B homotrimer is less specific than that of the PLI-A homotrimer. The sequence is that of Phospholipase A2 inhibitor subunit B from Protobothrops flavoviridis (Habu).